Consider the following 204-residue polypeptide: Chaperone protein TorD (204 aa).

Belongs to the TorD/DmsD family. TorD subfamily.

The protein localises to the cytoplasm. In terms of biological role, involved in the biogenesis of TorA. Acts on TorA before the insertion of the molybdenum cofactor and, as a result, probably favors a conformation of the apoenzyme that is competent for acquiring the cofactor. In Shewanella baltica (strain OS223), this protein is Chaperone protein TorD.